The sequence spans 219 residues: Ribose-5-phosphate isomerase A (219 aa).

Substrate-binding positions include 28–31, 81–84, and 94–97; these read SGST, DGAD, and KGGG. Glu-103 serves as the catalytic Proton acceptor. Lys-121 serves as a coordination point for substrate.

The protein belongs to the ribose 5-phosphate isomerase family. In terms of assembly, homodimer.

It carries out the reaction aldehydo-D-ribose 5-phosphate = D-ribulose 5-phosphate. It functions in the pathway carbohydrate degradation; pentose phosphate pathway; D-ribose 5-phosphate from D-ribulose 5-phosphate (non-oxidative stage): step 1/1. Its function is as follows. Catalyzes the reversible conversion of ribose-5-phosphate to ribulose 5-phosphate. In Haemophilus ducreyi (strain 35000HP / ATCC 700724), this protein is Ribose-5-phosphate isomerase A.